The following is a 190-amino-acid chain: GTP cyclohydrolase 1 (190 aa).

C75, H78, and C146 together coordinate Zn(2+).

It belongs to the GTP cyclohydrolase I family. As to quaternary structure, homomer.

It carries out the reaction GTP + H2O = 7,8-dihydroneopterin 3'-triphosphate + formate + H(+). It participates in cofactor biosynthesis; 7,8-dihydroneopterin triphosphate biosynthesis; 7,8-dihydroneopterin triphosphate from GTP: step 1/1. This chain is GTP cyclohydrolase 1, found in Campylobacter lari (strain RM2100 / D67 / ATCC BAA-1060).